Reading from the N-terminus, the 226-residue chain is Pathogenesis-related protein R major form (226 aa).

The N-terminal stretch at 1 to 25 (MNFLKSFPFFAFLYFGQYFVAVTHA) is a signal peptide. Disulfide bonds link Cys34-Cys225, Cys75-Cys85, Cys90-Cys96, Cys140-Cys214, Cys145-Cys197, Cys153-Cys163, Cys167-Cys176, and Cys177-Cys184.

This sequence belongs to the thaumatin family.

It localises to the vacuole. The chain is Pathogenesis-related protein R major form from Nicotiana tabacum (Common tobacco).